A 276-amino-acid polypeptide reads, in one-letter code: Large ribosomal subunit protein uL2 (276 aa).

Residues 225–276 form a disordered region; that stretch reads MNPVDHPHGGGEGRAPVGRKHPVTPWGKPAMGAKTRKKRKLSDKLIVKPRNK. The span at 258–276 shows a compositional bias: basic residues; it reads KTRKKRKLSDKLIVKPRNK.

The protein belongs to the universal ribosomal protein uL2 family. In terms of assembly, part of the 50S ribosomal subunit. Forms a bridge to the 30S subunit in the 70S ribosome.

Functionally, one of the primary rRNA binding proteins. Required for association of the 30S and 50S subunits to form the 70S ribosome, for tRNA binding and peptide bond formation. It has been suggested to have peptidyltransferase activity; this is somewhat controversial. Makes several contacts with the 16S rRNA in the 70S ribosome. The sequence is that of Large ribosomal subunit protein uL2 from Moorella thermoacetica (strain ATCC 39073 / JCM 9320).